The sequence spans 377 residues: Protein-tyrosine sulfotransferase 2 (377 aa).

Residues M1–V8 are Cytoplasmic-facing. A helical; Signal-anchor for type II membrane protein membrane pass occupies residues L9–G25. The Lumenal segment spans residues Q26–S377. R78–T82 serves as a coordination point for 3'-phosphoadenylyl sulfate. A disulfide bridge links C96 with C156. Residue E99 is the Proton donor/acceptor of the active site. The interval R101–R105 is interaction with peptide substrate. The 3'-phosphoadenylyl sulfate site is built by R183, S191, and R195. A disulfide bridge links C225 with C233. 3'-phosphoadenylyl sulfate is bound by residues Y238, S285 to N294, and K300. Residues N343 and N368 are each glycosylated (N-linked (GlcNAc...) asparagine).

It belongs to the protein sulfotransferase family. In terms of assembly, homodimer. Can also form heterodimers with TPST1. Post-translationally, N-glycosylated. In terms of tissue distribution, widely expressed.

It localises to the golgi apparatus membrane. The enzyme catalyses L-tyrosyl-[protein] + 3'-phosphoadenylyl sulfate = O-sulfo-L-tyrosine-[protein] + adenosine 3',5'-bisphosphate + H(+). Functionally, catalyzes the O-sulfation of tyrosine residues within acidic motifs of polypeptides, using 3'-phosphoadenylyl sulfate (PAPS) as cosubstrate. The sequence is that of Protein-tyrosine sulfotransferase 2 (TPST2) from Homo sapiens (Human).